Consider the following 220-residue polypeptide: Cell division protein DedD (220 aa).

A helical transmembrane segment spans residues 9-29 (LVGTIVLVALGVIVLPGLLDG). 2 disordered regions span residues 46 to 84 (KAGDRDEPDMMPAATQALPTQPPEGAAEEVRAGDAAAPS) and 97 to 137 (FEPE…EEKA). Over residues 57–70 (PAATQALPTQPPEG) the composition is skewed to low complexity. Pro residues predominate over residues 100–109 (EPAPVAPPKP). Basic and acidic residues-rich tracts occupy residues 110–119 (KPVEPPKPKV) and 127–137 (PEPKPVVEEKA). In terms of domain architecture, SPOR spans 138-217 (APTGKAYVVQ…SGLSGVVMGY (80 aa)).

Belongs to the DedD family.

The protein localises to the cell inner membrane. In terms of biological role, non-essential cell division protein that could be required for efficient cell constriction. This chain is Cell division protein DedD, found in Escherichia coli (strain K12).